The primary structure comprises 420 residues: L-rhamnose isomerase (420 aa).

His-264, Asp-296, and Asp-298 together coordinate Mn(2+).

This sequence belongs to the rhamnose isomerase family. Requires Mn(2+) as cofactor.

The protein resides in the cytoplasm. It catalyses the reaction L-rhamnopyranose = L-rhamnulose. Its pathway is carbohydrate degradation; L-rhamnose degradation; glycerone phosphate from L-rhamnose: step 1/3. Its function is as follows. Catalyzes the interconversion of L-rhamnose and L-rhamnulose. This Listeria innocua serovar 6a (strain ATCC BAA-680 / CLIP 11262) protein is L-rhamnose isomerase.